A 1998-amino-acid chain; its full sequence is Receptor-type tyrosine-protein phosphatase beta (1998 aa).

An N-terminal signal peptide occupies residues 1-22; that stretch reads MLRHGALTALWITLSVVQTGVA. Fibronectin type-III domains lie at 23–109, 113–206, 207–291, 292–384, 378–466, 470–556, 557–642, 643–733, 734–821, 822–913, 908–994, 995–1088, 1086–1173, 1176–1263, 1264–1357, 1358–1449, and 1449–1551; these read EQVK…VLQT, PPAR…VPSP, VKDL…TAPM, EVSN…VRNL, PEKV…QGRT, AVLQ…TVPA, QVTD…EGRT, VPSS…TVPD, KVQG…TIPE, PVKD…TVKN, PSTV…LGQT, VPAS…VPAA, PAAV…GRTV, AVNH…TAPS, PPSL…TKPD, KIQN…IDRP, and PPQP…KLGA. Over 23 to 1622 the chain is Extracellular; that stretch reads EQVKCNFTLL…ESEPLFGVIE (1600 aa). 6 N-linked (GlcNAc...) asparagine glycosylation sites follow: asparagine 28, asparagine 53, asparagine 75, asparagine 173, asparagine 199, and asparagine 268. Residues asparagine 415, asparagine 422, asparagine 480, asparagine 575, asparagine 599, and asparagine 653 are each glycosylated (N-linked (GlcNAc...) asparagine). The N-linked (GlcNAc...) asparagine glycan is linked to asparagine 830. Residues asparagine 1041, asparagine 1097, asparagine 1164, asparagine 1186, asparagine 1213, asparagine 1275, asparagine 1368, asparagine 1471, asparagine 1475, and asparagine 1519 are each glycosylated (N-linked (GlcNAc...) asparagine). Residues 1623-1643 form a helical membrane-spanning segment; the sequence is GVSAGLFLIGMLVALVAFFIC. Over 1644–1997 the chain is Cytoplasmic; that stretch reads RQKASHSRER…EYHRDAIYSR (354 aa). The region spanning 1704–1964 is the Tyrosine-protein phosphatase domain; it reads LSKEYEDLKD…VYLHQCVRDV (261 aa). Substrate-binding positions include aspartate 1871, 1905–1911, and glutamine 1949; that span reads CSAGVGR. Cysteine 1905 serves as the catalytic Phosphocysteine intermediate. The residue at position 1982 (tyrosine 1982) is a Phosphotyrosine.

The protein belongs to the protein-tyrosine phosphatase family. Receptor class 3 subfamily. In terms of assembly, monomer. Interacts with TEK. Interacts via fibronectin type-III 17 domain with CDH5. Detected in a complex with CNTN1 and NRCAM. Interacts (phosphorylated form) with FYN and GRB2. Interacts with IGFBP2. As to expression, expression is very high in the vasculature of lung, spleen, and kidney, as well as in the heart valves, and is also present in the endothelium of arterioles and venules. Also expressed in tumor vasculature.

The protein resides in the membrane. It carries out the reaction O-phospho-L-tyrosyl-[protein] + H2O = L-tyrosyl-[protein] + phosphate. Its function is as follows. Plays an important role in blood vessel remodeling and angiogenesis. Not necessary for the initial formation of blood vessels, but is essential for their maintenance and remodeling. Can induce dephosphorylation of TEK/TIE2, CDH5/VE-cadherin and KDR/VEGFR-2. Regulates angiopoietin-TIE2 signaling in endothelial cells. Acts as a negative regulator of TIE2, and controls TIE2 driven endothelial cell proliferation, which in turn affects blood vessel remodeling during embryonic development and determines blood vessel size during perinatal growth. Essential for the maintenance of endothelial cell contact integrity and for the adhesive function of VE-cadherin in endothelial cells and this requires the presence of plakoglobin. In Mus musculus (Mouse), this protein is Receptor-type tyrosine-protein phosphatase beta (Ptprb).